Reading from the N-terminus, the 364-residue chain is DNA replication and repair protein RecF (364 aa).

Residue 30–37 (GNNGQGKT) participates in ATP binding.

The protein belongs to the RecF family.

It is found in the cytoplasm. Its function is as follows. The RecF protein is involved in DNA metabolism; it is required for DNA replication and normal SOS inducibility. RecF binds preferentially to single-stranded, linear DNA. It also seems to bind ATP. This is DNA replication and repair protein RecF from Geotalea daltonii (strain DSM 22248 / JCM 15807 / FRC-32) (Geobacter daltonii).